The primary structure comprises 358 residues: Glutamate--cysteine ligase (358 aa).

It belongs to the glutamate--cysteine ligase type 2 family. YbdK subfamily.

It carries out the reaction L-cysteine + L-glutamate + ATP = gamma-L-glutamyl-L-cysteine + ADP + phosphate + H(+). Its function is as follows. Catalyzes the synthesis of gamma-glutamylcysteine (gamma-GC), the main low-molecular-weight thiol compound instead of glutathione in halophilic archaea. The polypeptide is Glutamate--cysteine ligase (Haloferax volcanii (strain ATCC 29605 / DSM 3757 / JCM 8879 / NBRC 14742 / NCIMB 2012 / VKM B-1768 / DS2) (Halobacterium volcanii)).